The sequence spans 441 residues: Maltokinase (441 aa).

Belongs to the aminoglycoside phosphotransferase family. Monomer.

The enzyme catalyses D-maltose + ATP = alpha-maltose 1-phosphate + ADP + H(+). It functions in the pathway glycan biosynthesis; glycogen biosynthesis. Functionally, catalyzes the ATP-dependent phosphorylation of maltose to maltose 1-phosphate. Is involved in a branched alpha-glucan biosynthetic pathway from trehalose, together with TreS, GlgE and GlgB. The polypeptide is Maltokinase (mak) (Mycolicibacterium vanbaalenii (strain DSM 7251 / JCM 13017 / BCRC 16820 / KCTC 9966 / NRRL B-24157 / PYR-1) (Mycobacterium vanbaalenii)).